Reading from the N-terminus, the 392-residue chain is Dihydroorotate dehydrogenase (quinone) (392 aa).

Residues 90-94 (AGFDK) and Thr114 each bind FMN. Residue Lys94 participates in substrate binding. 139–143 (NRMGF) serves as a coordination point for substrate. Residues Asn173 and Asn206 each contribute to the FMN site. Residue Asn206 participates in substrate binding. The active-site Nucleophile is Ser209. Asn211 lines the substrate pocket. 2 residues coordinate FMN: Lys243 and Val271. Substrate is bound at residue 272 to 273 (NT). Residues Gly301, Gly330, and 351–352 (YT) contribute to the FMN site.

Belongs to the dihydroorotate dehydrogenase family. Type 2 subfamily. As to quaternary structure, monomer. It depends on FMN as a cofactor.

It localises to the cell membrane. It catalyses the reaction (S)-dihydroorotate + a quinone = orotate + a quinol. It participates in pyrimidine metabolism; UMP biosynthesis via de novo pathway; orotate from (S)-dihydroorotate (quinone route): step 1/1. Functionally, catalyzes the conversion of dihydroorotate to orotate with quinone as electron acceptor. The polypeptide is Dihydroorotate dehydrogenase (quinone) (Prochlorococcus marinus (strain MIT 9313)).